We begin with the raw amino-acid sequence, 354 residues long: Tryptophan--tRNA ligase (354 aa).

ATP-binding positions include 13-15 and 21-22; these read QPT and GN. The 'HIGH' region motif lies at 14–22; sequence PTGNLHLGN. D137 contributes to the L-tryptophan binding site. Residues 149–151, V208, and 217–221 contribute to the ATP site; these read GDD and KMSKS. The 'KMSKS' region signature appears at 217–221; it reads KMSKS.

The protein belongs to the class-I aminoacyl-tRNA synthetase family. In terms of assembly, homodimer.

Its subcellular location is the cytoplasm. The catalysed reaction is tRNA(Trp) + L-tryptophan + ATP = L-tryptophyl-tRNA(Trp) + AMP + diphosphate + H(+). Functionally, catalyzes the attachment of tryptophan to tRNA(Trp). The protein is Tryptophan--tRNA ligase of Agrobacterium fabrum (strain C58 / ATCC 33970) (Agrobacterium tumefaciens (strain C58)).